A 203-amino-acid polypeptide reads, in one-letter code: dITP/XTP pyrophosphatase (203 aa).

Substrate is bound at residue 8–13; that stretch reads TANKGK. Mg(2+) contacts are provided by glutamate 41 and aspartate 70. The active-site Proton acceptor is the aspartate 70. Residues serine 71, 153–156, lysine 176, and 181–182 contribute to the substrate site; these read FGYD and HR.

It belongs to the HAM1 NTPase family. As to quaternary structure, homodimer. Requires Mg(2+) as cofactor.

It carries out the reaction XTP + H2O = XMP + diphosphate + H(+). The catalysed reaction is dITP + H2O = dIMP + diphosphate + H(+). The enzyme catalyses ITP + H2O = IMP + diphosphate + H(+). In terms of biological role, pyrophosphatase that catalyzes the hydrolysis of nucleoside triphosphates to their monophosphate derivatives, with a high preference for the non-canonical purine nucleotides XTP (xanthosine triphosphate), dITP (deoxyinosine triphosphate) and ITP. Seems to function as a house-cleaning enzyme that removes non-canonical purine nucleotides from the nucleotide pool, thus preventing their incorporation into DNA/RNA and avoiding chromosomal lesions. In Listeria innocua serovar 6a (strain ATCC BAA-680 / CLIP 11262), this protein is dITP/XTP pyrophosphatase.